Consider the following 598-residue polypeptide: Phospholipase B-like protein G (598 aa).

The first 24 residues, 1 to 24 (MIKSYYLFFIILIFLIFINNFILC), serve as a signal peptide directing secretion. N-linked (GlcNAc...) asparagine glycosylation is found at Asn50, Asn98, Asn173, Asn341, Asn368, Asn450, Asn480, Asn526, and Asn576.

The protein belongs to the phospholipase B-like family.

It localises to the secreted. Probable phospholipase. This is Phospholipase B-like protein G (plbG) from Dictyostelium discoideum (Social amoeba).